Reading from the N-terminus, the 65-residue chain is Large ribosomal subunit protein bL35 (65 aa).

A disordered region spans residues 1 to 28; that stretch reads MPKIKTNRGAAKRFRKTGSGKIRRNKAF. The segment covering 10 to 26 has biased composition (basic residues); sequence AAKRFRKTGSGKIRRNK.

It belongs to the bacterial ribosomal protein bL35 family.

This chain is Large ribosomal subunit protein bL35, found in Syntrophotalea carbinolica (strain DSM 2380 / NBRC 103641 / GraBd1) (Pelobacter carbinolicus).